Consider the following 334-residue polypeptide: snRNA-activating protein complex subunit 2 (334 aa).

2 disordered regions span residues 137–200 (LHSK…STEE) and 271–306 (AGGSLGPAAEGDGAGSKAPEETPPATEKAEHSELKS). The span at 167-180 (IPSSAPAAPSSAPR) shows a compositional bias: low complexity.

Part of the SNAPc complex composed of 5 subunits: SNAPC1, SNAPC2, SNAPC3, SNAPC4 and SNAPC5. SNAPC2 interacts with TBP and SNAPC4.

Its subcellular location is the nucleus. Its function is as follows. Part of the SNAPc complex required for the transcription of both RNA polymerase II and III small-nuclear RNA genes. Binds to the proximal sequence element (PSE), a non-TATA-box basal promoter element common to these 2 types of genes. Recruits TBP and BRF2 to the U6 snRNA TATA box. The protein is snRNA-activating protein complex subunit 2 (SNAPC2) of Homo sapiens (Human).